We begin with the raw amino-acid sequence, 643 residues long: Threonine--tRNA ligase (643 aa).

The 61-residue stretch at 1–61 (MPTIKFIDGT…TNDSIVKFVY (61 aa)) folds into the TGS domain. The segment at 244–535 (DHRKISKILD…LIEEYIGNFP (292 aa)) is catalytic. 3 residues coordinate Zn(2+): Cys335, His386, and His512.

It belongs to the class-II aminoacyl-tRNA synthetase family. In terms of assembly, homodimer. The cofactor is Zn(2+).

The protein localises to the cytoplasm. The catalysed reaction is tRNA(Thr) + L-threonine + ATP = L-threonyl-tRNA(Thr) + AMP + diphosphate + H(+). Catalyzes the attachment of threonine to tRNA(Thr) in a two-step reaction: L-threonine is first activated by ATP to form Thr-AMP and then transferred to the acceptor end of tRNA(Thr). Also edits incorrectly charged L-seryl-tRNA(Thr). The sequence is that of Threonine--tRNA ligase from Buchnera aphidicola subsp. Baizongia pistaciae (strain Bp).